Consider the following 683-residue polypeptide: ATP-dependent zinc metalloprotease FtsH 2 (683 aa).

Over residues 1 to 12 (MADQTSQNDNQN) the composition is skewed to polar residues. The segment at 1–21 (MADQTSQNDNQNGSGLPGGGP) is disordered. Residues 1-28 (MADQTSQNDNQNGSGLPGGGPSGTGRGR) lie on the Cytoplasmic side of the membrane. A helical transmembrane segment spans residues 29-49 (LIIWVIAGTLLALWAYSYWGM). The Periplasmic segment spans residues 50 to 136 (GASGGERISY…VTKPESSFPW (87 aa)). The chain crosses the membrane as a helical span at residues 137-157 (GLVIMGLLPVLLLFGVGYIFL). The Cytoplasmic portion of the chain corresponds to 158 to 683 (RRMQSQGQGL…ASGSADASGS (526 aa)). ATP is bound at residue 228–235 (GPPGTGKT). Zn(2+) is bound at residue His-450. The active site involves Glu-451. 2 residues coordinate Zn(2+): His-454 and Asp-526. The disordered stretch occupies residues 627–683 (VNGDTDEIGHMPTTNGAAASEENGSADDHEPDEATVIEEDGESGEGRASGSADASGS). The span at 655 to 669 (HEPDEATVIEEDGES) shows a compositional bias: acidic residues. Over residues 672-683 (GRASGSADASGS) the composition is skewed to low complexity.

In the central section; belongs to the AAA ATPase family. It in the C-terminal section; belongs to the peptidase M41 family. As to quaternary structure, homohexamer. Requires Zn(2+) as cofactor.

Its subcellular location is the cell inner membrane. In terms of biological role, acts as a processive, ATP-dependent zinc metallopeptidase for both cytoplasmic and membrane proteins. Plays a role in the quality control of integral membrane proteins. The sequence is that of ATP-dependent zinc metalloprotease FtsH 2 from Salinibacter ruber (strain M8).